We begin with the raw amino-acid sequence, 859 residues long: Protein translocase subunit SecA (859 aa).

ATP-binding positions include glutamine 88, 106–110 (GEGKT), and aspartate 496. The segment at 818 to 838 (FSHQPQSEVKVSRNDPCPCGS) is disordered. Residues cysteine 834, cysteine 836, cysteine 845, and cysteine 846 each coordinate Zn(2+).

The protein belongs to the SecA family. In terms of assembly, monomer and homodimer. Part of the essential Sec protein translocation apparatus which comprises SecA, SecYEG and auxiliary proteins SecDF-YajC and YidC. Requires Zn(2+) as cofactor.

Its subcellular location is the cell inner membrane. The protein resides in the cytoplasm. The enzyme catalyses ATP + H2O + cellular proteinSide 1 = ADP + phosphate + cellular proteinSide 2.. In terms of biological role, part of the Sec protein translocase complex. Interacts with the SecYEG preprotein conducting channel. Has a central role in coupling the hydrolysis of ATP to the transfer of proteins into and across the cell membrane, serving as an ATP-driven molecular motor driving the stepwise translocation of polypeptide chains across the membrane. The polypeptide is Protein translocase subunit SecA (Wolinella succinogenes (strain ATCC 29543 / DSM 1740 / CCUG 13145 / JCM 31913 / LMG 7466 / NCTC 11488 / FDC 602W) (Vibrio succinogenes)).